Consider the following 528-residue polypeptide: PC4 and SFRS1-interacting protein (528 aa).

The PWWP domain occupies Pro7–Asn64. Residue Lys75 forms a Glycyl lysine isopeptide (Lys-Gly) (interchain with G-Cter in SUMO2) linkage. The segment at Asn86 to Asp347 is disordered. Residues Phe92–Ser106 show a composition bias toward polar residues. A phosphoserine mark is found at Ser102, Ser105, and Ser106. Basic and acidic residues predominate over residues Lys113–Lys135. Thr115 and Thr122 each carry phosphothreonine. Ser129 is modified (phosphoserine). Thr141 is modified (phosphothreonine). Basic residues predominate over residues Ala144–Ala153. The short motif at Arg146–Gln156 is the Nuclear localization signal element. 2 positions are modified to phosphoserine: Ser176 and Ser205. Positions Asp212–Arg260 are enriched in basic and acidic residues. A Phosphoserine modification is found at Ser270. A Phosphothreonine modification is found at Thr271. A phosphoserine mark is found at Ser272 and Ser274. Over residues Lys285–Met300 the composition is skewed to basic residues. A compositionally biased stretch (basic and acidic residues) spans Gly303–Asp347. 2 coiled-coil regions span residues Gln304 to Lys332 and Asn369 to Glu393. An integrase-binding domain (IBD) region spans residues Val338–Thr415. A Phosphoserine modification is found at Ser432. Position 435 is a phosphothreonine (Thr435). A Phosphoserine modification is found at Ser441. The span at Glu444–Thr471 shows a compositional bias: basic and acidic residues. The segment at Glu444 to Asn528 is disordered. Over residues Gly472–Gly492 the composition is skewed to polar residues. Residues Glu496–Asn528 show a composition bias toward basic and acidic residues. Arg515 carries the post-translational modification Citrulline. Phosphoserine is present on Ser520. Thr525 carries the phosphothreonine modification.

It belongs to the HDGF family. As to quaternary structure, monomer. Interacts with IFRD1/PC4. Interacts (via IBD domain) with POGZ (via IBM motif) and CDCA7L (via IBM motifs). Interacts (via IBD domain) with KMT2A (via IBM motifs) with a moderate affinity whereas interacts with the KMT2A-MEN1 complex with a greater affinity; MEN1 enhances interaction of KMT2A with PSIP1. Interacts (via IBD domain) with IWS1 (via IBM motif), MED1 (via IBM motif) and DBF4 (via IBM motifs). Post-translationally, citrullinated by PADI4.

Its subcellular location is the nucleus. Transcriptional coactivator involved in neuroepithelial stem cell differentiation and neurogenesis. Involved in particular in lens epithelial cell gene regulation and stress responses. May play an important role in lens epithelial to fiber cell terminal differentiation. May play a protective role during stress-induced apoptosis. The sequence is that of PC4 and SFRS1-interacting protein (Psip1) from Rattus norvegicus (Rat).